Here is a 428-residue protein sequence, read N- to C-terminus: Enolase (428 aa).

Residue Q163 coordinates (2R)-2-phosphoglycerate. The active-site Proton donor is E205. D242, E284, and D311 together coordinate Mg(2+). 4 residues coordinate (2R)-2-phosphoglycerate: K336, R365, S366, and K387. The active-site Proton acceptor is K336.

Belongs to the enolase family. Mg(2+) is required as a cofactor.

The protein resides in the cytoplasm. It localises to the secreted. Its subcellular location is the cell surface. The enzyme catalyses (2R)-2-phosphoglycerate = phosphoenolpyruvate + H2O. It functions in the pathway carbohydrate degradation; glycolysis; pyruvate from D-glyceraldehyde 3-phosphate: step 4/5. Catalyzes the reversible conversion of 2-phosphoglycerate (2-PG) into phosphoenolpyruvate (PEP). It is essential for the degradation of carbohydrates via glycolysis. This chain is Enolase, found in Tropheryma whipplei (strain TW08/27) (Whipple's bacillus).